The primary structure comprises 389 residues: GDSL esterase/lipase At5g14450 (389 aa).

A signal peptide spans 1–30 (MKDNLERAKLMVSSTVFSWLLLCLFAVTTS). Ser-48 acts as the Nucleophile in catalysis. N-linked (GlcNAc...) asparagine glycans are attached at residues Asn-125 and Asn-335. Catalysis depends on residues Asp-354 and His-357.

It belongs to the 'GDSL' lipolytic enzyme family.

It localises to the secreted. In Arabidopsis thaliana (Mouse-ear cress), this protein is GDSL esterase/lipase At5g14450.